The sequence spans 215 residues: Ribonuclease T (215 aa).

Residues 20–194 form the Exonuclease domain; the sequence is VVIDVETAGF…YDTLQTAKLF (175 aa). Positions 23, 25, 181, and 186 each coordinate Mg(2+). The active-site Proton donor/acceptor is the histidine 181.

The protein belongs to the RNase T family. As to quaternary structure, homodimer. Mg(2+) is required as a cofactor.

In terms of biological role, trims short 3' overhangs of a variety of RNA species, leaving a one or two nucleotide 3' overhang. Responsible for the end-turnover of tRNA: specifically removes the terminal AMP residue from uncharged tRNA (tRNA-C-C-A). Also appears to be involved in tRNA biosynthesis. This is Ribonuclease T from Yersinia pestis.